The primary structure comprises 453 residues: Nuclear distribution protein PAC1-2 (453 aa).

Residues 9–41 enclose the LisH domain; it reads QADELHKSIVAYLTANNLSTTAATLREELSLGE. Residues 63–87 adopt a coiled-coil conformation; that stretch reads VVRLQKKVMDLESRSVALQSELEHS. Residues 84–108 form a disordered region; the sequence is LEHSTPASLSKRKDPTSWLPRSPPR. WD repeat units lie at residues 113–154, 156–196, 200–243, 246–285, 290–350, 352–391, and 396–448; these read SHQA…RTLK, HTRA…KNTR, GHDH…CIKT, GHTG…PESK, GHEN…IKTL, GHDN…RCVK, and AHGQ…DKVV.

It belongs to the WD repeat LIS1/nudF family. As to quaternary structure, self-associates. Interacts with NDL1 and dynein.

Its subcellular location is the cytoplasm. It is found in the cytoskeleton. It localises to the spindle pole. Its function is as follows. Positively regulates the activity of the minus-end directed microtubule motor protein dynein. May enhance dynein-mediated microtubule sliding by targeting dynein to the microtubule plus end. Required for nuclear migration during vegetative growth as well as development. Required for retrograde early endosome (EE) transport from the hyphal tip. Required for localization of dynein to the mitotic spindle poles. Recruits additional proteins to the dynein complex at SPBs. The sequence is that of Nuclear distribution protein PAC1-2 from Chaetomium globosum (strain ATCC 6205 / CBS 148.51 / DSM 1962 / NBRC 6347 / NRRL 1970) (Soil fungus).